Consider the following 135-residue polypeptide: Phosphoribosyl-AMP cyclohydrolase (135 aa).

Residue Asp78 coordinates Mg(2+). Cys79 serves as a coordination point for Zn(2+). 2 residues coordinate Mg(2+): Asp80 and Asp82. Zn(2+)-binding residues include Cys96 and Cys103.

It belongs to the PRA-CH family. As to quaternary structure, homodimer. Mg(2+) serves as cofactor. Requires Zn(2+) as cofactor.

Its subcellular location is the cytoplasm. It catalyses the reaction 1-(5-phospho-beta-D-ribosyl)-5'-AMP + H2O = 1-(5-phospho-beta-D-ribosyl)-5-[(5-phospho-beta-D-ribosylamino)methylideneamino]imidazole-4-carboxamide. It functions in the pathway amino-acid biosynthesis; L-histidine biosynthesis; L-histidine from 5-phospho-alpha-D-ribose 1-diphosphate: step 3/9. Functionally, catalyzes the hydrolysis of the adenine ring of phosphoribosyl-AMP. This chain is Phosphoribosyl-AMP cyclohydrolase, found in Cupriavidus metallidurans (strain ATCC 43123 / DSM 2839 / NBRC 102507 / CH34) (Ralstonia metallidurans).